The sequence spans 503 residues: Probable cytosol aminopeptidase (503 aa).

Residues lysine 274 and aspartate 279 each contribute to the Mn(2+) site. Lysine 286 is an active-site residue. Mn(2+) is bound by residues aspartate 297, aspartate 356, and glutamate 358. Arginine 360 is a catalytic residue.

It belongs to the peptidase M17 family. Mn(2+) is required as a cofactor.

It localises to the cytoplasm. The enzyme catalyses Release of an N-terminal amino acid, Xaa-|-Yaa-, in which Xaa is preferably Leu, but may be other amino acids including Pro although not Arg or Lys, and Yaa may be Pro. Amino acid amides and methyl esters are also readily hydrolyzed, but rates on arylamides are exceedingly low.. It catalyses the reaction Release of an N-terminal amino acid, preferentially leucine, but not glutamic or aspartic acids.. In terms of biological role, presumably involved in the processing and regular turnover of intracellular proteins. Catalyzes the removal of unsubstituted N-terminal amino acids from various peptides. This is Probable cytosol aminopeptidase from Burkholderia thailandensis (strain ATCC 700388 / DSM 13276 / CCUG 48851 / CIP 106301 / E264).